Consider the following 313-residue polypeptide: MAGRSRYDNPFEEGGGDEVNPFADKASKGGSAGQSSYSGGAFYTTQSRPSAPPATHLSPLPPEPADFYNDFSTPVDIPMDTSKDMKTREKELLAKEAELNRREKEIKRREEAAARAGIVLEDKNWPPFFPIIHNDIGNEIPVHLQRTQYVAFASLLGLVLCLFWNIICVTAAWIKGEGPKIWFLAVIYFILGCPGAYYLWYRPLYRAMRNESALKFGWFFLFYLVHIAFCVYAAVSPSILFVGKSLTGIFPAISLIGNTVIVGVFYFLGFAMFCLESLLSMWVIQRVYLYFRGSGKEAEMKREAARSAARAAF.

Positions 1–69 (MAGRSRYDNP…LPPEPADFYN (69 aa)) are disordered. Residues 1–148 (MAGRSRYDNP…EIPVHLQRTQ (148 aa)) lie on the Cytoplasmic side of the membrane. A coiled-coil region spans residues 85-116 (MKTREKELLAKEAELNRREKEIKRREEAAARA). The next 4 membrane-spanning stretches (helical) occupy residues 149–169 (YVAF…IICV), 181–201 (IWFL…YLWY), 216–236 (FGWF…AAVS), and 255–275 (LIGN…MFCL). At 276 to 313 (ESLLSMWVIQRVYLYFRGSGKEAEMKREAARSAARAAF) the chain is on the cytoplasmic side.

It belongs to the SCAMP family.

Its subcellular location is the cell membrane. The protein resides in the cytoplasmic vesicle. It is found in the secretory vesicle membrane. Functionally, probably involved in membrane trafficking. In Oryza sativa subsp. japonica (Rice), this protein is Secretory carrier-associated membrane protein 4 (SCAMP4).